The primary structure comprises 423 residues: Probable sucrose-phosphatase 3b (423 aa).

It belongs to the sucrose phosphatase family. Homodimer. Mg(2+) is required as a cofactor.

The enzyme catalyses sucrose 6(F)-phosphate + H2O = sucrose + phosphate. The protein operates within glycan biosynthesis; sucrose biosynthesis; sucrose from D-fructose 6-phosphate and UDP-alpha-D-glucose: step 2/2. In terms of biological role, catalyzes the final step of sucrose synthesis. This is Probable sucrose-phosphatase 3b (SPP3B) from Arabidopsis thaliana (Mouse-ear cress).